We begin with the raw amino-acid sequence, 444 residues long: Probable glycine dehydrogenase (decarboxylating) subunit 1 (444 aa).

It belongs to the GcvP family. N-terminal subunit subfamily. In terms of assembly, the glycine cleavage system is composed of four proteins: P, T, L and H. In this organism, the P 'protein' is a heterodimer of two subunits.

The enzyme catalyses N(6)-[(R)-lipoyl]-L-lysyl-[glycine-cleavage complex H protein] + glycine + H(+) = N(6)-[(R)-S(8)-aminomethyldihydrolipoyl]-L-lysyl-[glycine-cleavage complex H protein] + CO2. Its function is as follows. The glycine cleavage system catalyzes the degradation of glycine. The P protein binds the alpha-amino group of glycine through its pyridoxal phosphate cofactor; CO(2) is released and the remaining methylamine moiety is then transferred to the lipoamide cofactor of the H protein. This is Probable glycine dehydrogenase (decarboxylating) subunit 1 from Carboxydothermus hydrogenoformans (strain ATCC BAA-161 / DSM 6008 / Z-2901).